Here is a 215-residue protein sequence, read N- to C-terminus: Endonuclease III (215 aa).

A HhH domain is found at 113–132; sequence REDLESLPGVGRKTANVILN. [4Fe-4S] cluster is bound by residues cysteine 192, cysteine 199, cysteine 202, and cysteine 208.

Belongs to the Nth/MutY family. It depends on [4Fe-4S] cluster as a cofactor.

The enzyme catalyses 2'-deoxyribonucleotide-(2'-deoxyribose 5'-phosphate)-2'-deoxyribonucleotide-DNA = a 3'-end 2'-deoxyribonucleotide-(2,3-dehydro-2,3-deoxyribose 5'-phosphate)-DNA + a 5'-end 5'-phospho-2'-deoxyribonucleoside-DNA + H(+). DNA repair enzyme that has both DNA N-glycosylase activity and AP-lyase activity. The DNA N-glycosylase activity releases various damaged pyrimidines from DNA by cleaving the N-glycosidic bond, leaving an AP (apurinic/apyrimidinic) site. The AP-lyase activity cleaves the phosphodiester bond 3' to the AP site by a beta-elimination, leaving a 3'-terminal unsaturated sugar and a product with a terminal 5'-phosphate. This is Endonuclease III from Buchnera aphidicola subsp. Baizongia pistaciae (strain Bp).